The primary structure comprises 134 residues: Small ribosomal subunit protein bS16 (134 aa).

The disordered stretch occupies residues 81–134; that stretch reads LAKRPARSNPKKAEPGKKAQERLAAARQAEEEAKAAAEAAAAAPAEAPAEEAAS. Basic and acidic residues predominate over residues 91-101; it reads KKAEPGKKAQE. Over residues 116–134 the composition is skewed to low complexity; that stretch reads AAEAAAAAPAEAPAEEAAS.

This sequence belongs to the bacterial ribosomal protein bS16 family.

This Chelativorans sp. (strain BNC1) protein is Small ribosomal subunit protein bS16.